We begin with the raw amino-acid sequence, 320 residues long: tRNA pseudouridine synthase B (320 aa).

Catalysis depends on Asp49, which acts as the Nucleophile.

This sequence belongs to the pseudouridine synthase TruB family. Type 1 subfamily.

The catalysed reaction is uridine(55) in tRNA = pseudouridine(55) in tRNA. Its function is as follows. Responsible for synthesis of pseudouridine from uracil-55 in the psi GC loop of transfer RNAs. The sequence is that of tRNA pseudouridine synthase B from Bartonella tribocorum (strain CIP 105476 / IBS 506).